Reading from the N-terminus, the 910-residue chain is DNA mismatch repair protein MutS (910 aa).

Residue G607–S614 participates in ATP binding.

It belongs to the DNA mismatch repair MutS family.

Functionally, this protein is involved in the repair of mismatches in DNA. It is possible that it carries out the mismatch recognition step. This protein has a weak ATPase activity. The protein is DNA mismatch repair protein MutS of Geobacillus thermodenitrificans (strain NG80-2).